Here is a 128-residue protein sequence, read N- to C-terminus: Glycine cleavage system H protein 2 (128 aa).

One can recognise a Lipoyl-binding domain in the interval 24 to 105 (TVTVGISDHA…PYSAWIFKVK (82 aa)). Lys-65 carries the N6-lipoyllysine modification.

The protein belongs to the GcvH family. The glycine cleavage system is composed of four proteins: P, T, L and H. The cofactor is (R)-lipoate.

In terms of biological role, the glycine cleavage system catalyzes the degradation of glycine. The H protein shuttles the methylamine group of glycine from the P protein to the T protein. The chain is Glycine cleavage system H protein 2 from Pseudomonas syringae pv. tomato (strain ATCC BAA-871 / DC3000).